Here is a 229-residue protein sequence, read N- to C-terminus: Translin (229 aa).

Residues 86 to 90 (RFHEH) form a DNA/RNA binding region. The tract at residues 177 to 198 (LDSGFRLLNLKNDSLRKRYDGL) is leucine-zipper.

The protein belongs to the translin family. In terms of assembly, ring-shaped heterooctamer of six TSN and two TSNAX subunits, DNA/RNA binding occurs inside the ring.

The protein localises to the cytoplasm. It is found in the nucleus. Its function is as follows. Exhibits both single-stranded and double-stranded endoribonuclease activity. May act as an activator of RNA-induced silencing complex (RISC) by facilitating endonucleolytic cleavage of the siRNA passenger strand. Functionally, DNA-binding protein that specifically recognizes consensus sequences at the breakpoint junctions in chromosomal translocations, mostly involving immunoglobulin (Ig)/T-cell receptor gene segments. Seems to recognize single-stranded DNA ends generated by staggered breaks occurring at recombination hot spots. The polypeptide is Translin (TSN) (Gallus gallus (Chicken)).